Here is a 362-residue protein sequence, read N- to C-terminus: 3-dehydroquinate synthase (362 aa).

NAD(+)-binding positions include 71–76, 105–109, 129–130, Lys142, Lys151, and 169–172; these read DGEQYK, GVVGD, TT, and CLKT. 3 residues coordinate Zn(2+): Glu184, His247, and His264.

It belongs to the sugar phosphate cyclases superfamily. Dehydroquinate synthase family. Requires NAD(+) as cofactor. The cofactor is Co(2+). Zn(2+) serves as cofactor.

It is found in the cytoplasm. It catalyses the reaction 7-phospho-2-dehydro-3-deoxy-D-arabino-heptonate = 3-dehydroquinate + phosphate. The protein operates within metabolic intermediate biosynthesis; chorismate biosynthesis; chorismate from D-erythrose 4-phosphate and phosphoenolpyruvate: step 2/7. Functionally, catalyzes the conversion of 3-deoxy-D-arabino-heptulosonate 7-phosphate (DAHP) to dehydroquinate (DHQ). This Escherichia coli O157:H7 protein is 3-dehydroquinate synthase.